Consider the following 258-residue polypeptide: MASDDSVPQHSVEKTTEYESSDRGLFDFMKKEEKDETKVIATEFEEKVQVSEPEPKYEDCKVVEEEEEKAAKPSLLEKLHRSGSSSSSSSSDEEVEEGGEKKKKKEKKGLKEKIEEKIHHKEEDTSVPVEVVTEPEKKKGFMEKIKEKLPGGGKKVEEETVAPPPPPAAAPVDCAVEGDPAKKGILEKIKEKIPGYHPKTSTEEEKKDNDCASAKLIIRCLDRMFDYYYYASFSCGVGLILCFDPLLWGPLISFGTSG.

3 disordered regions span residues 1–25 (MASD…DRGL), 46–131 (EKVQ…PVEV), and 148–175 (KLPG…VDCA). Basic and acidic residues-rich tracts occupy residues 11-25 (SVEK…DRGL), 46-80 (EKVQ…EKLH), 109-124 (GLKE…KEED), and 148-158 (KLPGGGKKVEE).

The protein belongs to the plant dehydrin family. In terms of processing, phosphorylated in embryogenic and somatic embryos. Not phosphorylated in non-embryogenic cells.

Phosphorylation of ECCP44 protein is thought to be involved in the acquisition of embryogenic competence. Unlike other dehydrins, it is not thought to function as an environmental stress tolerant. In Daucus carota (Wild carrot), this protein is Phosphoprotein ECPP44 (ECPP44).